A 373-amino-acid polypeptide reads, in one-letter code: Aromatic amino acid aminotransferase (373 aa).

At Lys212 the chain carries N6-(pyridoxal phosphate)lysine.

The protein belongs to the class-II pyridoxal-phosphate-dependent aminotransferase family. As to quaternary structure, homodimer. Requires pyridoxal 5'-phosphate as cofactor.

The catalysed reaction is an aromatic L-alpha-amino acid + 2-oxoglutarate = an aromatic oxo-acid + L-glutamate. Aminotransferase that catalyzes the conversion of aromatic amino acids and 2-oxoglutarate into corresponding aromatic oxo acids and L-glutamate. This chain is Aromatic amino acid aminotransferase, found in Corynebacterium jeikeium (strain K411).